We begin with the raw amino-acid sequence, 268 residues long: tRNA pseudouridine synthase A (268 aa).

Residue Asp52 is the Nucleophile of the active site. Substrate is bound at residue Tyr110.

It belongs to the tRNA pseudouridine synthase TruA family. In terms of assembly, homodimer.

It catalyses the reaction uridine(38/39/40) in tRNA = pseudouridine(38/39/40) in tRNA. In terms of biological role, formation of pseudouridine at positions 38, 39 and 40 in the anticodon stem and loop of transfer RNAs. The chain is tRNA pseudouridine synthase A from Prochlorococcus marinus (strain MIT 9215).